The primary structure comprises 273 residues: Dermonecrotic toxin LapSicTox-alphaIB1c (273 aa).

His-5 is an active-site residue. Mg(2+) contacts are provided by Glu-25 and Asp-27. Catalysis depends on His-41, which acts as the Nucleophile. Disulfide bonds link Cys-45/Cys-51 and Cys-47/Cys-190. Asp-85 is a binding site for Mg(2+). The N-linked (GlcNAc...) asparagine glycan is linked to Asn-250.

It belongs to the arthropod phospholipase D family. Class II subfamily. The cofactor is Mg(2+). As to expression, expressed by the venom gland.

The protein resides in the secreted. The enzyme catalyses an N-(acyl)-sphingosylphosphocholine = an N-(acyl)-sphingosyl-1,3-cyclic phosphate + choline. It carries out the reaction an N-(acyl)-sphingosylphosphoethanolamine = an N-(acyl)-sphingosyl-1,3-cyclic phosphate + ethanolamine. It catalyses the reaction a 1-acyl-sn-glycero-3-phosphocholine = a 1-acyl-sn-glycero-2,3-cyclic phosphate + choline. The catalysed reaction is a 1-acyl-sn-glycero-3-phosphoethanolamine = a 1-acyl-sn-glycero-2,3-cyclic phosphate + ethanolamine. In terms of biological role, dermonecrotic toxins cleave the phosphodiester linkage between the phosphate and headgroup of certain phospholipids (sphingolipid and lysolipid substrates), forming an alcohol (often choline) and a cyclic phosphate. This toxin acts on sphingomyelin (SM). It may also act on ceramide phosphoethanolamine (CPE), lysophosphatidylcholine (LPC) and lysophosphatidylethanolamine (LPE), but not on lysophosphatidylserine (LPS), and lysophosphatidylglycerol (LPG). It acts by transphosphatidylation, releasing exclusively cyclic phosphate products as second products. Induces dermonecrosis, hemolysis, increased vascular permeability, edema, inflammatory response, and platelet aggregation. The protein is Dermonecrotic toxin LapSicTox-alphaIB1c of Loxosceles apachea (Apache recluse spider).